The following is a 211-amino-acid chain: MKVTAAFASLLLTAFAAPAPEPVLVSRSAGINYVQNYNGNLGDFTYDESTGTFSMYWEDGVSSDFVVGLGWTTGSSKSITYSAQYSASSSSSYLAVYGWVNSPQAEYYIVEDYGDYNPCSSATSLGTVYSDGSTYQVCTDTRTNAPSITGTSTFTQYFSVRESTRTSGTVTIANHFNFWAQHGFGNSNFNYQVMAVEAWNGAGSASVTISS.

An N-terminal signal peptide occupies residues 1–16 (MKVTAAFASLLLTAFA). The 192-residue stretch at 19–210 (APEPVLVSRS…GAGSASVTIS (192 aa)) folds into the GH11 domain. E106 acts as the Nucleophile in catalysis. The Proton donor role is filled by E197.

This sequence belongs to the glycosyl hydrolase 11 (cellulase G) family.

It is found in the secreted. The enzyme catalyses Endohydrolysis of (1-&gt;4)-beta-D-xylosidic linkages in xylans.. It functions in the pathway glycan degradation; xylan degradation. Functionally, endo-1,4-beta-xylanase involved in the hydrolysis of xylan, a major structural heterogeneous polysaccharide found in plant biomass representing the second most abundant polysaccharide in the biosphere, after cellulose. In Aspergillus niger (strain ATCC MYA-4892 / CBS 513.88 / FGSC A1513), this protein is Probable endo-1,4-beta-xylanase 5 (XYN5).